Consider the following 344-residue polypeptide: Phosphate acyltransferase (344 aa).

Belongs to the PlsX family. As to quaternary structure, homodimer. Probably interacts with PlsY.

The protein localises to the cytoplasm. The enzyme catalyses a fatty acyl-[ACP] + phosphate = an acyl phosphate + holo-[ACP]. It functions in the pathway lipid metabolism; phospholipid metabolism. Functionally, catalyzes the reversible formation of acyl-phosphate (acyl-PO(4)) from acyl-[acyl-carrier-protein] (acyl-ACP). This enzyme utilizes acyl-ACP as fatty acyl donor, but not acyl-CoA. In Blochmanniella floridana, this protein is Phosphate acyltransferase.